A 100-amino-acid chain; its full sequence is Large ribosomal subunit protein uL23 (100 aa).

This sequence belongs to the universal ribosomal protein uL23 family. As to quaternary structure, part of the 50S ribosomal subunit. Contacts protein L29, and trigger factor when it is bound to the ribosome.

Functionally, one of the early assembly proteins it binds 23S rRNA. One of the proteins that surrounds the polypeptide exit tunnel on the outside of the ribosome. Forms the main docking site for trigger factor binding to the ribosome. The polypeptide is Large ribosomal subunit protein uL23 (Prochlorococcus marinus (strain MIT 9312)).